A 258-amino-acid polypeptide reads, in one-letter code: Leucine-rich repeat-containing protein 3B (258 aa).

Positions 1-33 are cleaved as a signal peptide; it reads MTPLDLWLSRSIPMCLLLQSLVLMVLCFPSAST. An LRRNT domain is found at 34–68; that stretch reads CPKGCTCQRSESPPHGLNVTCSLSRLKEIPPDVPP. N51 carries an N-linked (GlcNAc...) asparagine glycan. LRR repeat units follow at residues 69–90, 93–114, and 118–139; these read DTQL…IFHG, MLRR…AFIG, and SLEV…AFAR. The N-linked (GlcNAc...) asparagine glycan is linked to N98. The LRRCT domain occupies 149–196; the sequence is NPWHCDCALQQALGGMAHNHERVLCRSSELRDQEGQPFMAVDADLCNL. Residues 204–224 traverse the membrane as a helical segment; the sequence is AMLVTMFGWFAMVISYVVYYV.

It belongs to the LRRC3 family.

It localises to the membrane. The protein is Leucine-rich repeat-containing protein 3B (lrrc3b) of Danio rerio (Zebrafish).